The chain runs to 152 residues: DPNADTDESPALLISASITDTDTVKVILQAFAEDVTDDIYTIGGNLCYIKDSILYISDNSNVIDSIINGEKPATALSADKVEIAKNNTMALYLEFNSNLSLYGIGDEYTETFESVYITSNILESNHTQMLLKVNMRDKERNSLSIIKSFLGL.

This is an uncharacterized protein from Brachyspira hyodysenteriae (Treponema hyodysenteriae).